A 97-amino-acid chain; its full sequence is Protein MxiI (97 aa).

This sequence to S.typhimurium PrgJ.

Functionally, necessary for the secretion of IPA invasins. This Shigella flexneri protein is Protein MxiI (mxiI).